We begin with the raw amino-acid sequence, 292 residues long: Small ribosomal subunit protein uS2 (292 aa).

The tract at residues 265-292 (TETALDWSDEPVAGDWAAEPAADAQGGW) is disordered. The segment covering 277–292 (AGDWAAEPAADAQGGW) has biased composition (low complexity).

This sequence belongs to the universal ribosomal protein uS2 family. Component of the small ribosomal subunit. Mature ribosomes consist of a small (40S) and a large (60S) subunit. The 40S subunit contains about 33 different proteins and 1 molecule of RNA (18S). The 60S subunit contains about 49 different proteins and 3 molecules of RNA (25S, 5.8S and 5S). Interacts with RPS21.

The protein resides in the cytoplasm. Required for the assembly and/or stability of the 40S ribosomal subunit. Required for the processing of the 20S rRNA-precursor to mature 18S rRNA in a late step of the maturation of 40S ribosomal subunits. The polypeptide is Small ribosomal subunit protein uS2 (Cryptococcus neoformans var. neoformans serotype D (strain B-3501A) (Filobasidiella neoformans)).